A 61-amino-acid polypeptide reads, in one-letter code: Small ribosomal subunit protein uS14B (61 aa).

Zn(2+) is bound by residues C24, C27, C40, and C43.

This sequence belongs to the universal ribosomal protein uS14 family. Zinc-binding uS14 subfamily. In terms of assembly, part of the 30S ribosomal subunit. Contacts proteins S3 and S10. Zn(2+) serves as cofactor.

Its function is as follows. Binds 16S rRNA, required for the assembly of 30S particles and may also be responsible for determining the conformation of the 16S rRNA at the A site. This Streptomyces avermitilis (strain ATCC 31267 / DSM 46492 / JCM 5070 / NBRC 14893 / NCIMB 12804 / NRRL 8165 / MA-4680) protein is Small ribosomal subunit protein uS14B.